Consider the following 461-residue polypeptide: Transcription factor SOX-10 (461 aa).

5 disordered regions span residues M1–D60, L154–G191, L205–N268, K350–S369, and A433–P461. Positions A30–N42 are enriched in polar residues. Residues E56–P96 form a dimerization (DIM) region. Residues V98–K166 constitute a DNA-binding region (HMG box). Basic and acidic residues predominate over residues L154 to Y167. Gly residues predominate over residues E181–G191. The transactivation domain (TAM) stretch occupies residues P221–V306. The span at A247–I264 shows a compositional bias: basic and acidic residues. Positions K350 to P461 are transactivation domain (TAC). Polar residues predominate over residues V441–P461.

It is found in the cytoplasm. Its subcellular location is the nucleus. In terms of biological role, transcription factor that plays a central role in developing and mature glia. Specifically activates expression of myelin genes, during oligodendrocyte (OL) maturation, thereby playing a central role in oligodendrocyte maturation and CNS myelination. In Gallus gallus (Chicken), this protein is Transcription factor SOX-10 (SOX10).